Reading from the N-terminus, the 323-residue chain is MAAAPSESIPSVNKAWVYSEYGKTSDVLKFDPSVAVPEIKEDQVLIKVVAASLNPVDFKRALGYFKDTDSPLPTIPGYDVAGVVVKVGSQVTKFKVGDEVYGDLNETALVNPTRFGSLAEYTAAYERVLAHKPKNLSFIEAASLPLAIETAHEGLERAELSAGKSVLVLGGAGGVGTHIIQLAKHVFGASKVAATASTKKLDLLRTLGAADLAIDYTKENFEDLPEKFDVVYDAVGETDKAVKAVKEGGKVVTIVGPATPPAILFVLTSKGSVLEKLKPYLESGKVKPVLDPTSPYPFTKVVEAFGYLESSRATGKVVVYPIP.

NADP(+) contacts are provided by residues K59, 174-175 (GV), 197-200 (STKK), Y216, I254, 265-267 (FVL), and 312-313 (RA). Position 59 (K59) interacts with substrate.

This sequence belongs to the zinc-containing alcohol dehydrogenase family. Quinone oxidoreductase subfamily. As to quaternary structure, monomer. In terms of processing, the N-terminus is blocked. Expressed in parenchyma tissues of red fruits. Not found in vascular tissues. Also detected in the achenes.

It catalyses the reaction 4-hydroxy-2,5-dimethyl-furan-3(2H)-one + NADP(+) = 4-hydroxy-5-methyl-2-methylenefuran-3(2H)-one + NADPH + H(+). In terms of biological role, enone oxidoreductase involved in the biosynthesis of 4-hydroxy-2,5-dimethyl-3(2H)-furanone (HDMF or furaneol), the key flavor compound in strawberries. Can use both NADH and NADPH as the electron donor. This chain is 2-methylene-furan-3-one reductase (EO), found in Fragaria ananassa (Strawberry).